The following is a 66-amino-acid chain: uncharacterized protein (66 aa).

The 55-residue stretch at 5-59 (VKELRARFGYSQEKLGETVGVTRQTVAAIEKGDYVPSLLLALKICKAFSMKMEDV) folds into the HTH cro/C1-type domain. Residues 16–35 (QEKLGETVGVTRQTVAAIEK) constitute a DNA-binding region (H-T-H motif).

This is an uncharacterized protein from Bacillus subtilis (strain 168).